A 74-amino-acid polypeptide reads, in one-letter code: Pelophylaxin-3 (74 aa).

Residues Met1–Cys22 form the signal peptide. A propeptide spanning residues Glu23–Val39 is cleaved from the precursor. Residues Cys68 and Cys74 are joined by a disulfide bond.

In terms of tissue distribution, expressed by the skin glands.

The protein localises to the secreted. Its function is as follows. Antimicrobial peptide. The chain is Pelophylaxin-3 from Pelophylax fukienensis (Fukien gold-striped pond frog).